The chain runs to 129 residues: NADH-quinone oxidoreductase subunit A (129 aa).

The next 3 helical transmembrane spans lie at 6–26, 63–83, and 89–109; these read FWPF…IVGF, LVAV…AWAV, and GWIG…ALIY.

It belongs to the complex I subunit 3 family. In terms of assembly, NDH-1 is composed of 14 different subunits. Subunits NuoA, H, J, K, L, M, N constitute the membrane sector of the complex.

Its subcellular location is the cell inner membrane. The enzyme catalyses a quinone + NADH + 5 H(+)(in) = a quinol + NAD(+) + 4 H(+)(out). Its function is as follows. NDH-1 shuttles electrons from NADH, via FMN and iron-sulfur (Fe-S) centers, to quinones in the respiratory chain. The immediate electron acceptor for the enzyme in this species is believed to be ubiquinone. Couples the redox reaction to proton translocation (for every two electrons transferred, four hydrogen ions are translocated across the cytoplasmic membrane), and thus conserves the redox energy in a proton gradient. The polypeptide is NADH-quinone oxidoreductase subunit A (Nitrosococcus oceani (strain ATCC 19707 / BCRC 17464 / JCM 30415 / NCIMB 11848 / C-107)).